Reading from the N-terminus, the 430-residue chain is Tyrosine--tRNA ligase (430 aa).

Tyr32 lines the L-tyrosine pocket. Residues 37–46 (PTADSLHIGH) carry the 'HIGH' region motif. L-tyrosine contacts are provided by Tyr172 and Gln176. The 'KMSKS' region signature appears at 232-236 (KFGKT). Residue Lys235 participates in ATP binding. The S4 RNA-binding domain occupies 362 to 429 (IKAVDLCTEK…GKKNYYLLIA (68 aa)).

The protein belongs to the class-I aminoacyl-tRNA synthetase family. TyrS type 1 subfamily. As to quaternary structure, homodimer.

Its subcellular location is the cytoplasm. The catalysed reaction is tRNA(Tyr) + L-tyrosine + ATP = L-tyrosyl-tRNA(Tyr) + AMP + diphosphate + H(+). In terms of biological role, catalyzes the attachment of tyrosine to tRNA(Tyr) in a two-step reaction: tyrosine is first activated by ATP to form Tyr-AMP and then transferred to the acceptor end of tRNA(Tyr). The protein is Tyrosine--tRNA ligase of Parabacteroides distasonis (strain ATCC 8503 / DSM 20701 / CIP 104284 / JCM 5825 / NCTC 11152).